The primary structure comprises 78 residues: Large ribosomal subunit protein bL28 (78 aa).

The segment at 1–25 (MSRVCQVTGKRPAVGNNRSHAKNAT) is disordered.

This sequence belongs to the bacterial ribosomal protein bL28 family.

The polypeptide is Large ribosomal subunit protein bL28 (Vibrio cholerae serotype O1 (strain ATCC 39541 / Classical Ogawa 395 / O395)).